We begin with the raw amino-acid sequence, 101 residues long: Large ribosomal subunit protein bL21 (101 aa).

Belongs to the bacterial ribosomal protein bL21 family. As to quaternary structure, part of the 50S ribosomal subunit. Contacts protein L20.

Functionally, this protein binds to 23S rRNA in the presence of protein L20. The protein is Large ribosomal subunit protein bL21 of Beutenbergia cavernae (strain ATCC BAA-8 / DSM 12333 / CCUG 43141 / JCM 11478 / NBRC 16432 / NCIMB 13614 / HKI 0122).